We begin with the raw amino-acid sequence, 215 residues long: Kunitz trypsin inhibitor 4 (215 aa).

Residues 1–28 form the signal peptide; the sequence is MTKTTKTMNPKFYLVLALTAVLASNAYG. 2 cysteine pairs are disulfide-bonded: cysteine 66-cysteine 112 and cysteine 165-cysteine 176. A glycan (N-linked (GlcNAc...) asparagine) is linked at asparagine 206.

This sequence belongs to the protease inhibitor I3 (leguminous Kunitz-type inhibitor) family. Expressed in roots.

Its subcellular location is the endoplasmic reticulum. Its function is as follows. Exhibits Kunitz trypsin protease inhibitor activity. Involved in modulating programmed cell death (PCD) in plant-pathogen interactions. Can inhibit both serine proteases and cysteine proteases. May be involved in the modulation of the proteases that participate in the hydrolysis of dietary proteins in the gut of spider mites. This is Kunitz trypsin inhibitor 4 from Arabidopsis thaliana (Mouse-ear cress).